The following is a 212-amino-acid chain: Ribosome biogenesis protein RLP7 (212 aa).

This sequence belongs to the universal ribosomal protein uL30 family.

It localises to the nucleus. It is found in the nucleolus. In terms of biological role, involved in the biogenesis of the 60S ribosomal subunit. May act as a specificity factor that binds precursor rRNAs and tethers the enzymes that carry out the early 5' to 3' exonucleolytic reactions that generate the mature rRNAs. This is Ribosome biogenesis protein RLP7 (RLP7) from Cyberlindnera jadinii (Torula yeast).